The following is a 481-amino-acid chain: Cysteine--tRNA ligase (481 aa).

A Zn(2+)-binding site is contributed by Cys29. The 'HIGH' region signature appears at 31–41 (PTVYDYSHLGH). Residues Cys210, His235, and Glu239 each coordinate Zn(2+). Positions 272–276 (KMSKS) match the 'KMSKS' region motif. Lys275 is a binding site for ATP.

It belongs to the class-I aminoacyl-tRNA synthetase family. As to quaternary structure, monomer. Zn(2+) is required as a cofactor.

It localises to the cytoplasm. It carries out the reaction tRNA(Cys) + L-cysteine + ATP = L-cysteinyl-tRNA(Cys) + AMP + diphosphate. The protein is Cysteine--tRNA ligase of Anaeromyxobacter dehalogenans (strain 2CP-C).